The chain runs to 687 residues: Protein FAR1-RELATED SEQUENCE 1 (687 aa).

The 103-residue stretch at 35-137 (EFYKEYANSV…VKEHNHEIFT (103 aa)) folds into the FAR1 domain. Positions 211–254 (KAMHGCRPRVILTKHDQMLKEAVLEVFPSSRHCFYMWDTLGQMP) constitute an MULE domain. The segment at 440–476 (FVVVWNSESSEVVCSCRLFELKGFLCRHAMIVLQMSG) adopts an SWIM-type zinc-finger fold. The stretch at 540–562 (NVLNEALRKWENKSNLIQNLEES) forms a coiled coil.

Belongs to the FHY3/FAR1 family. As to expression, expressed in rosette and cauline leaves, inflorescences stems, flowers and siliques.

The protein localises to the nucleus. Putative transcription activator involved in regulating light control of development. The chain is Protein FAR1-RELATED SEQUENCE 1 (FRS1) from Arabidopsis thaliana (Mouse-ear cress).